The chain runs to 212 residues: Ribonuclease HII (212 aa).

In terms of domain architecture, RNase H type-2 spans 1-204 (MRVGIDEAGR…LRSTAPLYYI (204 aa)). Aspartate 6, glutamate 7, and aspartate 103 together coordinate a divalent metal cation.

Belongs to the RNase HII family. It depends on Mn(2+) as a cofactor. Mg(2+) serves as cofactor.

It is found in the cytoplasm. It catalyses the reaction Endonucleolytic cleavage to 5'-phosphomonoester.. Endonuclease that specifically degrades the RNA of RNA-DNA hybrids. The sequence is that of Ribonuclease HII from Saccharolobus solfataricus (strain ATCC 35092 / DSM 1617 / JCM 11322 / P2) (Sulfolobus solfataricus).